We begin with the raw amino-acid sequence, 758 residues long: Probable C-mannosyltransferase DPY19L2 (758 aa).

The segment at 1 to 58 is disordered; sequence MRKQGVSSKRLQSSGRSQSKGRRGASLAREPEVEEEMEKSALGGGKLPRGSWRSSPGR. Residues 1–107 lie on the Nuclear side of the membrane; the sequence is MRKQGVSSKR…ELQARRFSSR (107 aa). Positions 7-18 are enriched in low complexity; the sequence is SSKRLQSSGRSQ. Residues 108–128 form a helical membrane-spanning segment; sequence TTLGIAVFVAILHWLHLVTLF. Residues 129-194 are Perinuclear space-facing; it reads ENDRHFSHLS…INAIKRFHLY (66 aa). A helical membrane pass occupies residues 195–215; sequence PEVIIASWYCTFMGIMNLFGL. Over 216–241 the chain is Nuclear; the sequence is ETKTCWNVTRIEPLNEVQSCEGLGDP. The next 2 helical transmembrane spans lie at 242-262 and 263-283; these read ACFY…LFFM and YGAY…CFFF. Over 284 to 296 the chain is Nuclear; the sequence is NHGEATRVMWTPP. The helical transmembrane segment at 297-317 threads the bilayer; it reads LRESFSYPFLVLQMCILTLIL. The Perinuclear space portion of the chain corresponds to 318–343; it reads RTSSNDRRPFIALCLSNVAFMLPWQF. The chain crosses the membrane as a helical span at residues 344 to 364; the sequence is AQFILFTQIASLFPMYVVGYI. Over 365 to 371 the chain is Nuclear; that stretch reads EPSKFQK. A helical transmembrane segment spans residues 372-392; the sequence is IIYMNMISVTLSFILMFGNSM. The Perinuclear space portion of the chain corresponds to 393–422; that stretch reads YLSSYYSSSLLMTWAIILKRNEIQKLGVSK. Residues 423 to 443 traverse the membrane as a helical segment; that stretch reads LNFWLIQGSAWWCGTIILKFL. The Nuclear segment spans residues 444 to 488; it reads TSKILGVSDHIRLSDLIAARILRYTDFDTLIYTCAPEFDFMEKAT. Residues 489 to 509 traverse the membrane as a helical segment; sequence PLRYTKTLLLPVVMVITCFIF. Topologically, residues 510–533 are perinuclear space; it reads KKTVRDISYVLATNIYLRKQLLEH. Residues 534-554 form a helical membrane-spanning segment; the sequence is SELAFHTLQLLVFTALAILIM. The Nuclear segment spans residues 555–758; the sequence is RLKMFLTPHM…NSVYRVLKVN (204 aa).

This sequence belongs to the dpy-19 family. In terms of assembly, interacts with FAM209. Widely expressed with high expression in testis. Not detectable in ejaculated sperm (at protein level).

It is found in the nucleus inner membrane. In terms of biological role, probable C-mannosyltransferase that mediates C-mannosylation of tryptophan residues on target proteins. Functionally, required during spermatogenesis for sperm head elongation and acrosome formation. Also plays a role in acrosome attachment to the nuclear envelope. This Homo sapiens (Human) protein is Probable C-mannosyltransferase DPY19L2.